A 320-amino-acid polypeptide reads, in one-letter code: Transmembrane protein 41 homolog (320 aa).

A disordered region spans residues 20–72 (GRAKALQEHSPDQVATPLLPQVPPQEQQDLNPQQQQQQQQQQQATPQKQAMSA). Residues 43 to 68 (PQEQQDLNPQQQQQQQQQQQATPQKQ) show a composition bias toward low complexity. 6 helical membrane passes run 83–103 (VIVAGIFVASLVTMCYVYAIF), 141–161 (VMFGVVVAYVFLQTFAIPGSL), 173–195 (FPIALFLICFCSALGATLCYTLS), 225–242 (LFNYMLFLRMTPILPNWF), 245–265 (LASPVIGVPLHIFALGTFCGV), and 289–309 (FSWTSMGILMACACASLLPGL).

It belongs to the TMEM41 family. In terms of tissue distribution, in embryos, strongly expressed in the nervous system.

It is found in the membrane. Required in cholinergic neurons, but not in motor neurons, for normal neurotransmitter release by motor neurons. Involved in muscle growth. In Drosophila melanogaster (Fruit fly), this protein is Transmembrane protein 41 homolog (stas).